A 723-amino-acid chain; its full sequence is Methionine--tRNA ligase (723 aa).

A 'HIGH' region motif is present at residues 12–22 (PYANGDIHLGH). Zn(2+) is bound by residues C143, C146, C156, and C159. A 'KMSKS' region motif is present at residues 345–349 (KMSKS). Position 348 (K348) interacts with ATP. The interval 568–604 (PAAATAPAKDAKPAKEAGSQQRHAEKQQHAAGVSETA) is disordered. Residues 612 to 723 (DFTKVDLRIA…EGAQAGMRVK (112 aa)) enclose the tRNA-binding domain.

It belongs to the class-I aminoacyl-tRNA synthetase family. MetG type 1 subfamily. Homodimer. Zn(2+) serves as cofactor.

Its subcellular location is the cytoplasm. It catalyses the reaction tRNA(Met) + L-methionine + ATP = L-methionyl-tRNA(Met) + AMP + diphosphate. Functionally, is required not only for elongation of protein synthesis but also for the initiation of all mRNA translation through initiator tRNA(fMet) aminoacylation. The polypeptide is Methionine--tRNA ligase (Azoarcus sp. (strain BH72)).